The primary structure comprises 24 residues: FLPLLAGLAANFLPKIFCKITRKC.

An intrachain disulfide couples Cys-18 to Cys-24.

In terms of tissue distribution, expressed by the skin glands.

It is found in the secreted. In terms of biological role, antimicrobial peptide. Stimulates insulin release by BRIN-BD11 cells in vitro. This chain is Brevinin-1E, found in Pelophylax saharicus (Sahara frog).